Here is a 503-residue protein sequence, read N- to C-terminus: Probable cytosol aminopeptidase (503 aa).

The Mn(2+) site is built by Lys-270 and Asp-275. The active site involves Lys-282. Mn(2+)-binding residues include Asp-293, Asp-352, and Glu-354. Residue Arg-356 is part of the active site.

It belongs to the peptidase M17 family. The cofactor is Mn(2+).

The protein resides in the cytoplasm. The enzyme catalyses Release of an N-terminal amino acid, Xaa-|-Yaa-, in which Xaa is preferably Leu, but may be other amino acids including Pro although not Arg or Lys, and Yaa may be Pro. Amino acid amides and methyl esters are also readily hydrolyzed, but rates on arylamides are exceedingly low.. It carries out the reaction Release of an N-terminal amino acid, preferentially leucine, but not glutamic or aspartic acids.. Its function is as follows. Presumably involved in the processing and regular turnover of intracellular proteins. Catalyzes the removal of unsubstituted N-terminal amino acids from various peptides. This Sodalis glossinidius (strain morsitans) protein is Probable cytosol aminopeptidase.